A 447-amino-acid chain; its full sequence is Serine/threonine-protein phosphatase 2A 55 kDa regulatory subunit B gamma isoform (447 aa).

WD repeat units follow at residues 22-61 (TPAD…KNAP), 87-128 (EIEE…KRPE), 171-209 (GHTY…RSFN), 220-260 (DLTE…LCDK), 279-317 (EIIS…RPIE), 334-375 (ENDC…DVTL), and 410-446 (DFTK…NSDM).

It belongs to the phosphatase 2A regulatory subunit B family. PP2A consists of a common heterodimeric core enzyme, composed of a 36 kDa catalytic subunit (subunit C) and a 65 kDa constant regulatory subunit (PR65 or subunit A), that associates with a variety of regulatory subunits. Proteins that associate with the core dimer include three families of regulatory subunits B (the R2/B/PR55/B55, R3/B''/PR72/PR130/PR59 and R5/B'/B56 families), the 48 kDa variable regulatory subunit, viral proteins, and cell signaling molecules. Interacts with IER5.

The B regulatory subunit might modulate substrate selectivity and catalytic activity, and might also direct the localization of the catalytic enzyme to a particular subcellular compartment. The polypeptide is Serine/threonine-protein phosphatase 2A 55 kDa regulatory subunit B gamma isoform (PPP2R2C) (Macaca fascicularis (Crab-eating macaque)).